A 164-amino-acid polypeptide reads, in one-letter code: NADH-quinone oxidoreductase subunit I (164 aa).

2 4Fe-4S ferredoxin-type domains span residues 55-85 (LRRY…IDAE) and 95-124 (TRYD…EGPN). [4Fe-4S] cluster contacts are provided by C65, C68, C71, C75, C104, C107, C110, and C114.

This sequence belongs to the complex I 23 kDa subunit family. NDH-1 is composed of 14 different subunits. Subunits NuoA, H, J, K, L, M, N constitute the membrane sector of the complex. [4Fe-4S] cluster is required as a cofactor.

It localises to the cell inner membrane. It catalyses the reaction a quinone + NADH + 5 H(+)(in) = a quinol + NAD(+) + 4 H(+)(out). Functionally, NDH-1 shuttles electrons from NADH, via FMN and iron-sulfur (Fe-S) centers, to quinones in the respiratory chain. The immediate electron acceptor for the enzyme in this species is believed to be ubiquinone. Couples the redox reaction to proton translocation (for every two electrons transferred, four hydrogen ions are translocated across the cytoplasmic membrane), and thus conserves the redox energy in a proton gradient. The sequence is that of NADH-quinone oxidoreductase subunit I from Ruegeria sp. (strain TM1040) (Silicibacter sp.).